Reading from the N-terminus, the 698-residue chain is Polyribonucleotide nucleotidyltransferase (698 aa).

2 residues coordinate Mg(2+): D485 and D491. Positions 552-611 constitute a KH domain; that stretch reads PRITTIKINPEKIRDVIGKGGAVIRALTEETGTTIELDDDGTVKIASSNGEATKEAIRRI. In terms of domain architecture, S1 motif spans 621 to 689; it reads GRVYNGKVIR…RQGRVRLSIK (69 aa).

Belongs to the polyribonucleotide nucleotidyltransferase family. As to quaternary structure, component of the RNA degradosome, which is a multiprotein complex involved in RNA processing and mRNA degradation. Mg(2+) is required as a cofactor.

Its subcellular location is the cytoplasm. The enzyme catalyses RNA(n+1) + phosphate = RNA(n) + a ribonucleoside 5'-diphosphate. Involved in mRNA degradation. Catalyzes the phosphorolysis of single-stranded polyribonucleotides processively in the 3'- to 5'-direction. The chain is Polyribonucleotide nucleotidyltransferase from Shewanella denitrificans (strain OS217 / ATCC BAA-1090 / DSM 15013).